We begin with the raw amino-acid sequence, 492 residues long: UDP-N-acetylmuramoyl-L-alanyl-D-glutamate--2,6-diaminopimelate ligase (492 aa).

Position 30 (Ser-30) interacts with UDP-N-acetyl-alpha-D-muramoyl-L-alanyl-D-glutamate. 114-120 (GTNGKTS) provides a ligand contact to ATP. Residues 156 to 157 (TT), Ser-183, Gln-189, and Arg-191 contribute to the UDP-N-acetyl-alpha-D-muramoyl-L-alanyl-D-glutamate site. Lys-223 bears the N6-carboxylysine mark. Residues Arg-389, 413-416 (DNPR), Gly-462, and Glu-466 contribute to the meso-2,6-diaminopimelate site. The short motif at 413-416 (DNPR) is the Meso-diaminopimelate recognition motif element.

It belongs to the MurCDEF family. MurE subfamily. The cofactor is Mg(2+). Post-translationally, carboxylation is probably crucial for Mg(2+) binding and, consequently, for the gamma-phosphate positioning of ATP.

The protein localises to the cytoplasm. It carries out the reaction UDP-N-acetyl-alpha-D-muramoyl-L-alanyl-D-glutamate + meso-2,6-diaminopimelate + ATP = UDP-N-acetyl-alpha-D-muramoyl-L-alanyl-gamma-D-glutamyl-meso-2,6-diaminopimelate + ADP + phosphate + H(+). Its pathway is cell wall biogenesis; peptidoglycan biosynthesis. Catalyzes the addition of meso-diaminopimelic acid to the nucleotide precursor UDP-N-acetylmuramoyl-L-alanyl-D-glutamate (UMAG) in the biosynthesis of bacterial cell-wall peptidoglycan. The polypeptide is UDP-N-acetylmuramoyl-L-alanyl-D-glutamate--2,6-diaminopimelate ligase (Neisseria meningitidis serogroup B (strain ATCC BAA-335 / MC58)).